Reading from the N-terminus, the 629-residue chain is tRNA uridine 5-carboxymethylaminomethyl modification enzyme MnmG (629 aa).

13–18 (GGGHAG) contributes to the FAD binding site. 273–287 (GPRYCPSIEDKIHRF) contacts NAD(+).

The protein belongs to the MnmG family. As to quaternary structure, homodimer. Heterotetramer of two MnmE and two MnmG subunits. It depends on FAD as a cofactor.

It is found in the cytoplasm. Its function is as follows. NAD-binding protein involved in the addition of a carboxymethylaminomethyl (cmnm) group at the wobble position (U34) of certain tRNAs, forming tRNA-cmnm(5)s(2)U34. The chain is tRNA uridine 5-carboxymethylaminomethyl modification enzyme MnmG from Shewanella baltica (strain OS223).